Consider the following 631-residue polypeptide: Replication protein E1 (631 aa).

Residues 28 to 48 (TGDIISEDETEEDEGTASDLD) are disordered. Acidic residues predominate over residues 32–43 (ISEDETEEDEGT). Positions 86 to 88 (KRK) match the Nuclear localization signal motif. At Ser92 the chain carries Phosphoserine; by host. The interval 168–334 (IGATPPQQIQ…QTQIQHSFQD (167 aa)) is DNA-binding region. Residues 433-583 (VDFISFLSYF…FPIDTNGNPV (151 aa)) enclose the SF3 helicase domain. 459-466 (GPPNTGKS) is an ATP binding site. A Glycyl lysine isopeptide (Lys-Gly) (interchain with G-Cter in SUMO) cross-link involves residue Lys540.

This sequence belongs to the papillomaviridae E1 protein family. Can form hexamers. Interacts with E2 protein; this interaction increases E1 DNA binding specificity. Interacts with host DNA polymerase subunit POLA2. Interacts with host single stranded DNA-binding protein RPA1. Interacts with host TOP1; this interaction stimulates the enzymatic activity of TOP1. Phosphorylated. In terms of processing, sumoylated.

The protein resides in the host nucleus. The catalysed reaction is Couples ATP hydrolysis with the unwinding of duplex DNA by translocating in the 3'-5' direction.. The enzyme catalyses ATP + H2O = ADP + phosphate + H(+). ATP-dependent DNA 3'-5' helicase required for initiation of viral DNA replication. It forms a complex with the viral E2 protein. The E1-E2 complex binds to the replication origin which contains binding sites for both proteins. During the initial step, a dimer of E1 interacts with a dimer of protein E2 leading to a complex that binds the viral origin of replication with high specificity. Then, a second dimer of E1 displaces the E2 dimer in an ATP-dependent manner to form the E1 tetramer. Following this, two E1 monomers are added to each half of the site, which results in the formation of two E1 trimers on the viral ori. Subsequently, two hexamers will be created. The double hexamer acts as a bi-directional helicase machinery and unwinds the viral DNA and then recruits the host DNA polymerase to start replication. The sequence is that of Replication protein E1 from Homo sapiens (Human).